The primary structure comprises 1485 residues: Putative E3 ubiquitin-protein ligase LIN-2 (1485 aa).

A compositionally biased stretch (acidic residues) spans Glu337–Asp353. Disordered regions lie at residues Glu337–Pro363, Asn384–Ala450, and Arg462–Met507. Residues Ser438–Ala450 are compositionally biased toward low complexity. Over residues Ser466–Ser484 the composition is skewed to polar residues. The 76-residue stretch at Lys510 to Leu585 folds into the U-box domain. 4 WD repeats span residues Ser1194–Asp1232, Glu1246–Ile1283, Ser1409–Ser1448, and Gly1454–Asp1485.

It carries out the reaction S-ubiquitinyl-[E2 ubiquitin-conjugating enzyme]-L-cysteine + [acceptor protein]-L-lysine = [E2 ubiquitin-conjugating enzyme]-L-cysteine + N(6)-ubiquitinyl-[acceptor protein]-L-lysine.. Its pathway is protein modification; protein ubiquitination. Its function is as follows. Putative E3 ubiquitin-protein ligase involved in the rhizobial infection process. Plays an important role in the early steps of infection thread formation and in growth and differentiation of nodules. The chain is Putative E3 ubiquitin-protein ligase LIN-2 from Lotus japonicus (Lotus corniculatus var. japonicus).